A 434-amino-acid polypeptide reads, in one-letter code: MQVSVETTQGLGRRVTITVAADSIEKAVKSELVKAAKNVRIDGFRKGHVPMNIVEQRYGASVRQDVLGDLMQRNFVDAIIKEKINPAGAPNYVPGQYKEGEDFTYSVEFEVYPEVELKDLESIEVEKPVVEVNDADVDTMLETLRKQQATWKETDAAATAEDRATLDFTGSIDGEVFEGGKATDFVLAMGQGRMIPGFEEGVIGHKAGEEFTIDVNFPEDYHAENLKGKSAKFDIVLKKVEVRELPELTEEFIKRFGVADGSVAGLRAEVRKNMERELKGAVRNRVKTQAIDGLVSANEIDVPAALVEGEIDVLRRQAAQRFGGNEKQAAELPRELFEEQAKRRVVVGLLLGEVISQHELKADEDRVKALIEEMASAYEDPQEVIEFYSKNKELMNNMRNVALEEQAVETLLSKAKVTEKPTTFSELMNQTTTA.

In terms of domain architecture, PPIase FKBP-type spans 161–246; it reads EDRATLDFTG…LKKVEVRELP (86 aa).

This sequence belongs to the FKBP-type PPIase family. Tig subfamily.

It is found in the cytoplasm. The catalysed reaction is [protein]-peptidylproline (omega=180) = [protein]-peptidylproline (omega=0). Its function is as follows. Involved in protein export. Acts as a chaperone by maintaining the newly synthesized protein in an open conformation. Functions as a peptidyl-prolyl cis-trans isomerase. The chain is Trigger factor from Yersinia enterocolitica serotype O:8 / biotype 1B (strain NCTC 13174 / 8081).